A 249-amino-acid chain; its full sequence is uncharacterized protein (249 aa).

Belongs to the AIM2 family.

It localises to the cytoplasm. It is found in the nucleus. This is an uncharacterized protein from Schizosaccharomyces pombe (strain 972 / ATCC 24843) (Fission yeast).